The sequence spans 546 residues: Chaperonin GroEL 1 (546 aa).

ATP contacts are provided by residues Thr-30 to Pro-33, Lys-51, Asp-87 to Thr-91, Gly-415, Asn-479 to Ala-481, and Asp-495. The segment at Lys-526–Met-546 is disordered. A compositionally biased stretch (gly residues) spans Gly-534–Met-546.

This sequence belongs to the chaperonin (HSP60) family. In terms of assembly, forms a cylinder of 14 subunits composed of two heptameric rings stacked back-to-back. Interacts with the co-chaperonin GroES.

It is found in the cytoplasm. The enzyme catalyses ATP + H2O + a folded polypeptide = ADP + phosphate + an unfolded polypeptide.. Together with its co-chaperonin GroES, plays an essential role in assisting protein folding. The GroEL-GroES system forms a nano-cage that allows encapsulation of the non-native substrate proteins and provides a physical environment optimized to promote and accelerate protein folding. The polypeptide is Chaperonin GroEL 1 (Burkholderia pseudomallei (strain K96243)).